A 697-amino-acid chain; its full sequence is Portal protein (697 aa).

The interval 633–697 is disordered; it reads MSREAAGGVP…RRAGGPYGFH (65 aa). A compositionally biased stretch (basic and acidic residues) spans 664 to 689; the sequence is ITADEERRGPERVGRFRNGGPDDPRR.

This sequence belongs to the herpesviridae portal protein family. Homododecamerizes. Interacts with terminase subunits TRM1 and TRM3.

It is found in the virion. The protein localises to the host nucleus. Functionally, forms a portal in the viral capsid through which viral DNA is translocated during DNA packaging. Assembles as a dodecamer at a single fivefold axe of the T=16 icosahedric capsid. Binds to the molecular motor that translocates the viral DNA, termed terminase. This Homo sapiens (Human) protein is Portal protein (UL104).